The primary structure comprises 316 residues: MPGQNYRTISEFILSGFSAFPQQLLPVLFLLYLLMFLFTLLGNLLIMATVWIERRLHTPMYLFLCALSISEILFTVAITPRMLADLLFTHRSITFVACAIQMFFSFMFGFTHSFLLMVMGYDHYVTICHPLHYNMLMSPRGCAHLVAWTWAGGSVMGMMVTMMVFHLTFCGSNVIHHFLCHVLSLLKLACGSKTSSVIMGVMLVCVTALIGCLFLIILSFVFIVAAILRIPSAEGRHKTFSTCVSHLTVVVMHYSFASLIYLKPKGLHSMYSDALMATTYTVFTPFLSPIIFSLRNKELKNAINKNFCRRFCPLSS.

Over 1–25 the chain is Extracellular; sequence MPGQNYRTISEFILSGFSAFPQQLL. Residues 26 to 46 form a helical membrane-spanning segment; sequence PVLFLLYLLMFLFTLLGNLLI. Over 47–54 the chain is Cytoplasmic; that stretch reads MATVWIER. Residues 55–75 traverse the membrane as a helical segment; sequence RLHTPMYLFLCALSISEILFT. Topologically, residues 76–99 are extracellular; it reads VAITPRMLADLLFTHRSITFVACA. A disulfide bond links Cys98 and Cys190. A helical transmembrane segment spans residues 100-120; it reads IQMFFSFMFGFTHSFLLMVMG. Residues 121–139 are Cytoplasmic-facing; it reads YDHYVTICHPLHYNMLMSP. The chain crosses the membrane as a helical span at residues 140–160; that stretch reads RGCAHLVAWTWAGGSVMGMMV. At 161–197 the chain is on the extracellular side; sequence TMMVFHLTFCGSNVIHHFLCHVLSLLKLACGSKTSSV. A helical membrane pass occupies residues 198–218; the sequence is IMGVMLVCVTALIGCLFLIIL. Topologically, residues 219–238 are cytoplasmic; it reads SFVFIVAAILRIPSAEGRHK. Residues 239 to 259 traverse the membrane as a helical segment; that stretch reads TFSTCVSHLTVVVMHYSFASL. The Extracellular portion of the chain corresponds to 260–272; that stretch reads IYLKPKGLHSMYS. The helical transmembrane segment at 273 to 293 threads the bilayer; that stretch reads DALMATTYTVFTPFLSPIIFS. Residues 294–316 are Cytoplasmic-facing; the sequence is LRNKELKNAINKNFCRRFCPLSS.

This sequence belongs to the G-protein coupled receptor 1 family.

The protein resides in the cell membrane. Its function is as follows. Odorant receptor. The sequence is that of Olfactory receptor 10H3 (OR10H3) from Homo sapiens (Human).